An 829-amino-acid chain; its full sequence is Leucine--tRNA ligase (829 aa).

Residues 42–52 (PYPSGNLHMGH) carry the 'HIGH' region motif. Positions 582 to 586 (KMSKS) match the 'KMSKS' region motif. Lys585 is an ATP binding site.

This sequence belongs to the class-I aminoacyl-tRNA synthetase family.

The protein resides in the cytoplasm. It catalyses the reaction tRNA(Leu) + L-leucine + ATP = L-leucyl-tRNA(Leu) + AMP + diphosphate. This Moorella thermoacetica (strain ATCC 39073 / JCM 9320) protein is Leucine--tRNA ligase.